Here is a 697-residue protein sequence, read N- to C-terminus: Polyribonucleotide nucleotidyltransferase (697 aa).

Asp488 and Asp494 together coordinate Mg(2+). A KH domain is found at 555-614 (PTLLTLKINPDKIRDVIGKGGATIRALTEETGCTIDIEDDGSVKIYGETREKADEAVRRV). The 69-residue stretch at 624-692 (GAIYEGKVTR…QRGRIKLSMK (69 aa)) folds into the S1 motif domain.

The protein belongs to the polyribonucleotide nucleotidyltransferase family. In terms of assembly, component of the RNA degradosome, which is a multiprotein complex involved in RNA processing and mRNA degradation. Requires Mg(2+) as cofactor.

Its subcellular location is the cytoplasm. The enzyme catalyses RNA(n+1) + phosphate = RNA(n) + a ribonucleoside 5'-diphosphate. Involved in mRNA degradation. Catalyzes the phosphorolysis of single-stranded polyribonucleotides processively in the 3'- to 5'-direction. This chain is Polyribonucleotide nucleotidyltransferase, found in Alcanivorax borkumensis (strain ATCC 700651 / DSM 11573 / NCIMB 13689 / SK2).